The following is a 438-amino-acid chain: Putative F-box/FBD/LRR-repeat protein At5g44950 (438 aa).

Positions 3–49 (RDRISELPDGLLNHILMYLHIEESIRTSVLSSRWRKLWLKVPGLDVN) constitute an F-box domain. 2 LRR repeats span residues 246–275 (LSSLVKIDLDTEFNLKFGLGSPLEPEDLTK) and 286–310 (ISSVKHMIISHPTLEVLYRYSKIGQ). Residues 355–407 (PEQIDFTNLPRCLISTLEYVEIKQLTMREESGIKLVKYFLENSAVLKKLTLSF) form the FBD domain.

In Arabidopsis thaliana (Mouse-ear cress), this protein is Putative F-box/FBD/LRR-repeat protein At5g44950.